Consider the following 998-residue polypeptide: Collagen alpha-1(I) chain (998 aa).

The disordered stretch occupies residues 1–998 (SYGYDEKGGV…GPPGPPGPPG (998 aa)). The segment covering 9–22 (GVSVPGPMGPSGPR) has biased composition (low complexity). 4-hydroxyproline occurs at positions 25, 28, 30, 39, 42, 45, 59, 74, 80, 89, and 95. A compositionally biased stretch (basic and acidic residues) spans 62–76 (NGDDGEAGKPGRPGE). Lys-98 carries the post-translational modification 5-hydroxylysine; alternate. A glycan (O-linked (Gal...) hydroxylysine; alternate) is linked at Lys-98. A Phosphoserine modification is found at Ser-104. Residues 112-128 (DAGPAGPKGEPGSPGEN) are compositionally biased toward low complexity. Residues Pro-122, Pro-125, Pro-131, Pro-140, Pro-146, Pro-167, Pro-176, Pro-179, Pro-206, Pro-209, Pro-221, Pro-227, Pro-236, Pro-242, Pro-245, and Pro-260 each carry the 4-hydroxyproline modification. Over residues 146–164 (PGASGPAGARGNDGATGAA) the composition is skewed to low complexity. The span at 166 to 178 (PPGPTGPAGPPGF) shows a compositional bias: pro residues. Residues 212–251 (AGAAGPAGNPGADGQPGAKGANGAPGIAGAPGFPGARGPS) show a composition bias toward low complexity. Lys-263 is subject to 5-hydroxylysine. A 4-hydroxyproline mark is found at Pro-269, Pro-272, Pro-284, Pro-293, Pro-308, Pro-314, Pro-323, and Pro-329. A compositionally biased stretch (gly residues) spans 318-327 (GERGGPGSRG). Lys-338 is subject to 5-hydroxylysine. 4-hydroxyproline occurs at positions 347, 356, 362, 368, 377, 380, 389, 398, 404, 416, 425, 434, 437, 455, 472, 478, 484, 490, 496, 502, 514, 523, 537, 543, and 552. Low complexity predominate over residues 371–397 (KGLTGSPGSPGPDGKTGPPGPAGQDGR). The span at 406-425 (ARGQAGVMGFPGPKGAAGEP) shows a compositional bias: low complexity. A compositionally biased stretch (low complexity) spans 484-493 (PGEAGKPGEQ). Lys-564 bears the 5-hydroxylysine mark. Residues Pro-570, Pro-585, and Pro-591 each carry the 4-hydroxyproline modification. Positions 597–611 (SGPSGPAGPTGARGA) are enriched in low complexity. Phosphoserine is present on Ser-600. Residues Pro-612, Pro-618, Pro-621, Pro-630, Pro-636, Pro-654, Pro-663, and Pro-672 each carry the 4-hydroxyproline modification. Low complexity predominate over residues 624-651 (AGFAGPPGADGQPGAKGEPGDAGAKGDA). Residues 653-665 (PPGPAGPTGPPGP) are compositionally biased toward pro residues. Residue Lys-675 is modified to 5-hydroxylysine. Over residues 680–696 (SAGPPGATGFPGAAGRV) the composition is skewed to low complexity. 2 positions are modified to 4-hydroxyproline: Pro-684 and Pro-690. The residue at position 698 (Pro-698) is a 3-hydroxyproline. 16 positions are modified to 4-hydroxyproline: Pro-699, Pro-708, Pro-711, Pro-732, Pro-741, Pro-749, Pro-758, Pro-776, Pro-785, Pro-788, Pro-794, Pro-809, Pro-815, Pro-821, Pro-830, and Pro-836. Low complexity predominate over residues 725–734 (ETGPAGRPGE). Residues 746 to 758 (KGSPGADGPAGAP) are compositionally biased toward low complexity. Over residues 808–818 (PPGPMGPPGLA) the composition is skewed to pro residues. 5-hydroxylysine is present on Lys-845. Residues 853-868 (PGPPGAPGAPGAPGPV) are compositionally biased toward pro residues. Residues Pro-856, Pro-859, and Pro-862 each carry the 4-hydroxyproline modification. Residues 889 to 903 (AGPAGARGPAGPQGP) show a composition bias toward low complexity. Over residues 904–918 (RGDKGETGEQGDRGI) the composition is skewed to basic and acidic residues. Residue Lys-907 is modified to 5-hydroxylysine. Position 919 is a 5-hydroxylysine; alternate (Lys-919). O-linked (Gal...) hydroxylysine; alternate glycosylation is present at Lys-919. Pro-934, Pro-937, Pro-955, and Pro-970 each carry 4-hydroxyproline. The span at 937–970 (PGEQGPSGASGPAGPRGPPGSAGSPGKDGLNGLP) shows a compositional bias: low complexity. Pro-975 carries the 3-hydroxyproline modification. Pro-976 is subject to 4-hydroxyproline. The span at 988 to 998 (VGPPGPPGPPG) shows a compositional bias: pro residues. At Pro-990 the chain carries 3-hydroxyproline. The residue at position 991 (Pro-991) is a 4-hydroxyproline. Pro-993 carries the 3-hydroxyproline modification. 4-hydroxyproline is present on Pro-994. A 3-hydroxyproline modification is found at Pro-996. A 4-hydroxyproline modification is found at Pro-997.

Belongs to the fibrillar collagen family. As to quaternary structure, trimers of one alpha 2(I) and two alpha 1(I) chains. Contains mostly 4-hydroxyproline. Proline residues at the third position of the tripeptide repeating unit (G-X-Y) are hydroxylated in some or all of the chains. Post-translationally, contains 3-hydroxyproline at a few sites. This modification occurs on the first proline residue in the sequence motif Gly-Pro-Hyp, where Hyp is 4-hydroxyproline. In terms of processing, lysine residues at the third position of the tripeptide repeating unit (G-X-Y) are 5-hydroxylated in some or all of the chains. O-glycosylated on hydroxylated lysine residues. The O-linked glycan consists of a Glc-Gal disaccharide. As to expression, expressed in bones.

The protein localises to the secreted. Its subcellular location is the extracellular space. It localises to the extracellular matrix. Its function is as follows. Type I collagen is a member of group I collagen (fibrillar forming collagen). The protein is Collagen alpha-1(I) chain of Nothrotheriops shastensis (Shasta ground sloth).